The chain runs to 350 residues: MAVLVVLLSSLVSSALANEFSILRSPGSVVFRNGNWPIPGDRIPDVAALSMGFSVKEDLSWPGLAVGNLFHRPRATIMVTVKGVDKLALPTGSVISYPLENAVPFSLDSVANSIHSLFSEETPVVLQLAPSEERVYMVGKANSVFEDLSVTLRQLRNRLFQENSVLNSLPLNSLSRNNEVDLLFLSELQVLHDISSLLSRHKHLAKDHSPDLYSLELAGLDELGKRYGEDSEQFRDASRILVDALQKFADDMYSLYGGNAVVELVTVKSFDTSLVRKSRTILETKQENTQSPYNLAYKYNLEYSVVFNLVLWIMTGLALAVIITSYNIWNMDPGYDSIIYRMTNQKIRMD.

The signal sequence occupies residues 1–17 (MAVLVVLLSSLVSSALA). Over 18 to 302 (NEFSILRSPG…YNLAYKYNLE (285 aa)) the chain is Extracellular. A helical membrane pass occupies residues 303-323 (YSVVFNLVLWIMTGLALAVII). Residues 324-350 (TSYNIWNMDPGYDSIIYRMTNQKIRMD) lie on the Cytoplasmic side of the membrane. The short motif at 346–350 (KIRMD) is the Mediates retrograde transport to the ER element.

Interacts with renin. Accessory component of the multisubunit proton-transporting vacuolar (V)-ATPase protein pump. Interacts (via N-terminus) with ATP6AP1 (via N-terminus). Interacts with ATP6V0D1; ATP6V0D1 is a V-ATPase complex subunit and the interaction promotes V-ATPase complex assembly. Interacts with TMEM9; TMEM9 is a V-ATPase assembly regulator and the interaction induces the interaction with ATP6V0D1. Interacts with VMA21 (via N-terminus); VMA21 is a V-ATPase accessory component. Post-translationally, phosphorylated. In terms of processing, proteolytically cleaved by a furin-like convertase in the trans-Golgi network to generate N- and C-terminal fragments. As to expression, expressed in the brain.

Its subcellular location is the endoplasmic reticulum membrane. It is found in the lysosome membrane. The protein resides in the cytoplasmic vesicle. The protein localises to the autophagosome membrane. It localises to the cell projection. Its subcellular location is the dendritic spine membrane. It is found in the axon. The protein resides in the endosome membrane. The protein localises to the clathrin-coated vesicle membrane. It localises to the secretory vesicle. Its subcellular location is the synaptic vesicle membrane. Its function is as follows. Multifunctional protein which functions as a renin, prorenin cellular receptor and is involved in the assembly of the lysosomal proton-transporting V-type ATPase (V-ATPase) and the acidification of the endo-lysosomal system. May mediate renin-dependent cellular responses by activating ERK1 and ERK2. By increasing the catalytic efficiency of renin in AGT/angiotensinogen conversion to angiotensin I, may also play a role in the renin-angiotensin system (RAS). Through its function in V-type ATPase (v-ATPase) assembly and acidification of the lysosome it regulates protein degradation and may control different signaling pathways important for proper brain development, synapse morphology and synaptic transmission. The polypeptide is Renin receptor (Atp6ap2) (Rattus norvegicus (Rat)).